The following is a 362-amino-acid chain: MGFSGIWLNLYVVFGSLMVFERMVVMVVMKAQPLVPAIFIFGDSVVDVGNNNDIYTIVKANFPPYGRDFTTHTPTGRFCNGKLATDFTAENLGFKSYPQAYLSKKAKGKNLLIGANFASAASGYYDGTAKLYSAISLPQQLEHYKDYISRIQEIATSNNNSNASAIISNGIYIVSAGSSDFIQNYYINPLLYRDQSPDEFSDLLILSYSSFIQNLYSLGARRIGVTTLPPLGCLPAAITVVGPHEGGCSEKLNNDAISFNNKLNTTSQDLKRNLIGLNLVVFDIYQPLYDLATRPSEFGFAEARRACCGTGLLETSILCNPKSVGTCNNATEYVFWDGFHPTEAANKILADNLLVSGISLIS.

A signal peptide spans 1–28; that stretch reads MGFSGIWLNLYVVFGSLMVFERMVVMVV. The active-site Nucleophile is S44. Residues N159, N162, N264, and N329 are each glycosylated (N-linked (GlcNAc...) asparagine). Catalysis depends on residues D337 and H340.

It belongs to the 'GDSL' lipolytic enzyme family.

The protein localises to the secreted. This is GDSL esterase/lipase At5g22810 from Arabidopsis thaliana (Mouse-ear cress).